A 301-amino-acid chain; its full sequence is Homoserine O-acetyltransferase (301 aa).

C142 (acyl-thioester intermediate) is an active-site residue. Residues K163 and S192 each coordinate substrate. H235 (proton acceptor) is an active-site residue. E237 is an active-site residue. Residue R249 coordinates substrate.

This sequence belongs to the MetA family.

It localises to the cytoplasm. It catalyses the reaction L-homoserine + acetyl-CoA = O-acetyl-L-homoserine + CoA. Its pathway is amino-acid biosynthesis; L-methionine biosynthesis via de novo pathway; O-acetyl-L-homoserine from L-homoserine: step 1/1. Transfers an acetyl group from acetyl-CoA to L-homoserine, forming acetyl-L-homoserine. This is Homoserine O-acetyltransferase from Bacillus anthracis (strain A0248).